The primary structure comprises 446 residues: Exodeoxyribonuclease 7 large subunit (446 aa).

Belongs to the XseA family. Heterooligomer composed of large and small subunits.

It is found in the cytoplasm. It catalyses the reaction Exonucleolytic cleavage in either 5'- to 3'- or 3'- to 5'-direction to yield nucleoside 5'-phosphates.. Functionally, bidirectionally degrades single-stranded DNA into large acid-insoluble oligonucleotides, which are then degraded further into small acid-soluble oligonucleotides. In Streptococcus pneumoniae serotype 4 (strain ATCC BAA-334 / TIGR4), this protein is Exodeoxyribonuclease 7 large subunit.